The sequence spans 164 residues: Transcriptional regulator MraZ (164 aa).

2 consecutive SpoVT-AbrB domains span residues 7 to 57 (THQN…TVGA) and 86 to 129 (AYPL…NPEA). The segment at 133-164 (RRQAARSRARTLATSRRPASAPAAGNTAGAAE) is disordered. A compositionally biased stretch (low complexity) spans 142–164 (RTLATSRRPASAPAAGNTAGAAE).

The protein belongs to the MraZ family. Forms oligomers.

The protein resides in the cytoplasm. It is found in the nucleoid. This is Transcriptional regulator MraZ from Gluconobacter oxydans (strain 621H) (Gluconobacter suboxydans).